Consider the following 292-residue polypeptide: S-methyl-5'-thioadenosine phosphorylase (292 aa).

Phosphate is bound by residues S11, 53–54, and 86–87; these read RH and SA. Substrate is bound at residue M184. T185 serves as a coordination point for phosphate. 208-210 contacts substrate; that stretch reads DYD.

This sequence belongs to the PNP/MTAP phosphorylase family. MTAP subfamily. In terms of assembly, homohexamer. Dimer of a homotrimer.

The enzyme catalyses S-methyl-5'-thioadenosine + phosphate = 5-(methylsulfanyl)-alpha-D-ribose 1-phosphate + adenine. Its pathway is amino-acid biosynthesis; L-methionine biosynthesis via salvage pathway; S-methyl-5-thio-alpha-D-ribose 1-phosphate from S-methyl-5'-thioadenosine (phosphorylase route): step 1/1. Its function is as follows. Catalyzes the reversible phosphorylation of S-methyl-5'-thioadenosine (MTA) to adenine and 5-methylthioribose-1-phosphate. Involved in the breakdown of MTA, a major by-product of polyamine biosynthesis. Responsible for the first step in the methionine salvage pathway after MTA has been generated from S-adenosylmethionine. Has broad substrate specificity with 6-aminopurine nucleosides as preferred substrates. The polypeptide is S-methyl-5'-thioadenosine phosphorylase (Koribacter versatilis (strain Ellin345)).